A 433-amino-acid polypeptide reads, in one-letter code: Methylenetetrahydrofolate--tRNA-(uracil-5-)-methyltransferase TrmFO (433 aa).

7 to 12 (GGGLAG) is an FAD binding site.

This sequence belongs to the MnmG family. TrmFO subfamily. Requires FAD as cofactor.

The protein localises to the cytoplasm. It catalyses the reaction uridine(54) in tRNA + (6R)-5,10-methylene-5,6,7,8-tetrahydrofolate + NADH + H(+) = 5-methyluridine(54) in tRNA + (6S)-5,6,7,8-tetrahydrofolate + NAD(+). The catalysed reaction is uridine(54) in tRNA + (6R)-5,10-methylene-5,6,7,8-tetrahydrofolate + NADPH + H(+) = 5-methyluridine(54) in tRNA + (6S)-5,6,7,8-tetrahydrofolate + NADP(+). Functionally, catalyzes the folate-dependent formation of 5-methyl-uridine at position 54 (M-5-U54) in all tRNAs. This is Methylenetetrahydrofolate--tRNA-(uracil-5-)-methyltransferase TrmFO from Natranaerobius thermophilus (strain ATCC BAA-1301 / DSM 18059 / JW/NM-WN-LF).